We begin with the raw amino-acid sequence, 165 residues long: E3 ubiquitin-protein ligase RNF181 (165 aa).

Residues 88–129 (CPVCLLEFEAEETVIEMPCHHLFHSNCILPWLSKTNSCPLCR) form an RING-type; atypical zinc finger. The interval 136 to 165 (DDSYEEHKKDKARRQQQQHRLENLHGAMYT) is disordered. Thr-165 carries the post-translational modification Phosphothreonine.

It belongs to the RNF181 family. Directly interacts with ITGA2B and, as a result, with integrin ITGA2B/ITGB3. There is no evidence that integrin ITGA2B/ITGB3 is an endogenous substrate for RNF181-directed ubiquitination. Auto-ubiquitinated as part of the enzymatic reaction.

The enzyme catalyses S-ubiquitinyl-[E2 ubiquitin-conjugating enzyme]-L-cysteine + [acceptor protein]-L-lysine = [E2 ubiquitin-conjugating enzyme]-L-cysteine + N(6)-ubiquitinyl-[acceptor protein]-L-lysine.. Its pathway is protein modification; protein ubiquitination. Its function is as follows. E3 ubiquitin-protein ligase which accepts ubiquitin from an E2 ubiquitin-conjugating enzyme in the form of a thioester and then directly transfers the ubiquitin to targeted substrates. Catalyzes monoubiquitination of 26S proteasome subunit PSMC2/RPT1. In Mus musculus (Mouse), this protein is E3 ubiquitin-protein ligase RNF181.